The sequence spans 266 residues: NAD kinase 2 (266 aa).

Residue Asp-51 is the Proton acceptor of the active site. NAD(+) is bound by residues Asp-51–Gly-52, Asn-123–Glu-124, Arg-150, Asp-152, Thr-163–Ser-168, and Ala-187.

The protein belongs to the NAD kinase family. The cofactor is a divalent metal cation.

The protein resides in the cytoplasm. The enzyme catalyses NAD(+) + ATP = ADP + NADP(+) + H(+). Its function is as follows. Involved in the regulation of the intracellular balance of NAD and NADP, and is a key enzyme in the biosynthesis of NADP. Catalyzes specifically the phosphorylation on 2'-hydroxyl of the adenosine moiety of NAD to yield NADP. This Oceanobacillus iheyensis (strain DSM 14371 / CIP 107618 / JCM 11309 / KCTC 3954 / HTE831) protein is NAD kinase 2.